Reading from the N-terminus, the 38-residue chain is uncharacterized protein (38 aa).

This sequence belongs to the asfivirus C84L family.

This is an uncharacterized protein from Ornithodoros (relapsing fever ticks).